Reading from the N-terminus, the 138-residue chain is Putative pre-16S rRNA nuclease (138 aa).

It belongs to the YqgF nuclease family.

It is found in the cytoplasm. Its function is as follows. Could be a nuclease involved in processing of the 5'-end of pre-16S rRNA. The protein is Putative pre-16S rRNA nuclease of Polaromonas sp. (strain JS666 / ATCC BAA-500).